Reading from the N-terminus, the 846-residue chain is SLIT and NTRK-like protein 2 (846 aa).

Positions 1 to 21 (MLSGVWFLSVLTVAGILQTES) are cleaved as a signal peptide. Topologically, residues 22–622 (RKTAKDICKI…LHTEVPLSVL (601 aa)) are extracellular. Disulfide bonds link C29–C35 and C33–C46. LRR repeat units follow at residues 63–84 (RIYQLFLNGNLLTRLYPNEFVN), 87–108 (NAVTLHLGNNGLQEIRPGAFSG), 111–132 (TLKRLHLNNNKLEVLREDTFLG), 135–156 (SLEYLQADYNYISTIEAGAFSK), 159–180 (KLKVLILNDNLLLSLPSNVFRF), and 182–203 (LLTHLDLRGNRLKVMPFAGVLE). N-linked (GlcNAc...) asparagine glycosylation occurs at N84. Residues 167–215 (DNLLLSLPSNVFRFVLLTHLDLRGNRLKVMPFAGVLEHIGGIMEIQLEE) form a required for interaction with PTPRD region. The LRRCT 1 domain maps to 216 to 265 (NPWNCTCDLLPLKAWLDTITVFVGEIVCETPFRLHGKDVTQLTRQDLCPR). N-linked (GlcNAc...) asparagine glycosylation occurs at N219. Intrachain disulfides connect C220–C243 and C222–C263. The disordered stretch occupies residues 261–322 (DLCPRKSASG…TPRVTVSKDR (62 aa)). Composition is skewed to low complexity over residues 267–276 (SASGDSSQRS) and 285–300 (RLTPTTNPALNPTRAP). Residues 332 to 374 (QTKSPVALTCPSSCVCTSQSSDNGLNVNCQERKFTNISDLQPK) enclose the LRRNT domain. LRR repeat units lie at residues 377–398 (SPKKLYLTGNYLQTVYKNDLLE), 401–422 (SLDLLHLGNNRIAVIQEGAFTN), 425–446 (SLRRLYLNGNYLEVLYPSMFDG), 449–470 (SLQYLYLEYNVIKEIKPLTFDA), 473–494 (NLQLLFLNNNLLRSLPDNIFGG), and 496–517 (ALTRLNLRNNHFSHLPVKGVLD). N-linked (GlcNAc...) asparagine glycosylation is present at N422. The LRRCT 2 domain occupies 530–581 (NPWDCTCDIMGLKDWTEHANSPVIINEVTCESPAKHAGEILKFLGREAICPE). Residues 623–643 (ILGLLVVFILSVCFGAGLFVF) traverse the membrane as a helical segment. At 644-846 (VLKRRKGVPN…LEKQTAISQL (203 aa)) the chain is on the cytoplasmic side. A Phosphotyrosine modification is found at Y757.

This sequence belongs to the SLITRK family. As to quaternary structure, interacts with PTPRD; this interaction is PTPRD splicing-dependent and may induce pre-synaptic differentiation. Interacts with NTRK2. In the adult, significant expression is detected only in the brain. Broadly expressed in embryonic brain with highest expression in ventricular layer, subventricular zone, cortical plate, pyramidal layer of hippocampus, subicular neuroepithelium, thalamus, hypothalamus and spinal cord.

It localises to the membrane. It is found in the cell membrane. The protein localises to the cell projection. The protein resides in the dendrite. It is involved in synaptogenesis. Promotes excitatory synapse differentiation. Suppresses neurite outgrowth. Involved in the negative regulation of NTRK2. This Mus musculus (Mouse) protein is SLIT and NTRK-like protein 2 (Slitrk2).